We begin with the raw amino-acid sequence, 979 residues long: Zinc finger protein 280D (979 aa).

Residues Lys-32, Lys-34, Lys-74, and Lys-87 each participate in a glycyl lysine isopeptide (Lys-Gly) (interchain with G-Cter in SUMO2) cross-link. Positions 89–101 (TSQHYTNPTSNPV) are enriched in polar residues. Residues 89–119 (TSQHYTNPTSNPVPASPINFHPESRSSDSSV) form a disordered region. At Ser-104 the chain carries Phosphoserine. Residues Lys-126 and Lys-140 each participate in a glycyl lysine isopeptide (Lys-Gly) (interchain with G-Cter in SUMO2) cross-link. The tract at residues 157–236 (YQGGPTLSMA…TSSNQSKNGT (80 aa)) is disordered. Polar residues predominate over residues 169–187 (SESSFLSKRPSTSEVNNVN). Residues Lys-189, Lys-210, Lys-223, Lys-233, Lys-275, Lys-284, and Lys-292 each participate in a glycyl lysine isopeptide (Lys-Gly) (interchain with G-Cter in SUMO2) cross-link. Over residues 195–235 (ESVSGANSSAVLPSVKSPSVTSSQAMLAKGTNTSSNQSKNG) the composition is skewed to polar residues. C2H2-type zinc fingers lie at residues 321-343 (FKCF…MKHH) and 358-381 (TTCQ…ESTH). The segment at 388–412 (TICKICELSFETEHVLLQHMKDNHK) adopts a C2H2-type 3; degenerate zinc-finger fold. 2 C2H2-type zinc fingers span residues 418 to 441 (YVCQ…RTSH) and 449 to 469 (CPFC…YMKH). Disordered regions lie at residues 523 to 608 (GPLQ…NKKS), 739 to 809 (LKKE…SDKE), and 896 to 979 (FLRK…KERS). A compositionally biased stretch (low complexity) spans 527 to 541 (SGASPTPSISASAST). Polar residues-rich tracts occupy residues 542-584 (LQLS…NGSK) and 592-608 (SNMQ…NKKS). Ser-545 bears the Phosphoserine mark. Lys-550 participates in a covalent cross-link: Glycyl lysine isopeptide (Lys-Gly) (interchain with G-Cter in SUMO2). Residues 739–784 (LKKEAPAKEQEPVSKEIARPNMAERETETSNSESKQDKAASSKEKN) show a composition bias toward basic and acidic residues. A Glycyl lysine isopeptide (Lys-Gly) (interchain with G-Cter in SUMO2) cross-link involves residue Lys-740. Polar residues predominate over residues 786–797 (CNANSFEGSSTT). A compositionally biased stretch (basic and acidic residues) spans 798–809 (KSEESITVSDKE). Residues 905–914 (SVSSDVSEQG) show a composition bias toward polar residues. 2 positions are modified to phosphoserine: Ser-908 and Ser-911. Positions 970–979 (VDLEDEKERS) are enriched in acidic residues. A Glycyl lysine isopeptide (Lys-Gly) (interchain with G-Cter in SUMO2) cross-link involves residue Lys-976.

It localises to the nucleus. Functionally, may function as a transcription factor. The chain is Zinc finger protein 280D (ZNF280D) from Homo sapiens (Human).